The following is a 756-amino-acid chain: Nucleomorphin (756 aa).

Residues 1 to 10 (MDLDYSSDNS) are compositionally biased toward polar residues. The interval 1–113 (MDLDYSSDNS…SQSNEDLSSS (113 aa)) is disordered. Composition is skewed to low complexity over residues 16–66 (NQNN…RPSS) and 75–94 (NNNN…NNNN). Positions 95–113 (GATISHPPTSQSNEDLSSS) are enriched in polar residues. One can recognise a BRCT domain in the interval 124–216 (LNSNIFENLG…ELLGVENYLV (93 aa)). Disordered stretches follow at residues 229-251 (NSSQ…INEQ), 272-298 (PSSL…LKSE), 359-403 (KIDL…NKNN), and 422-463 (TSST…LLNL). 3 stretches are compositionally biased toward low complexity: residues 285–298 (LQTQ…LKSE), 364–401 (NNNN…NKNK), and 422–432 (TSSTSSTLSSS). A compositionally biased stretch (basic residues) spans 448 to 459 (KSKKKFSQKKNH). The Nuclear localization signal signature appears at 464-480 (KKSYQDPEIIAHSRPRK). A calmodulin binding region spans residues 495–512 (ANYISNLDGFKYYARANK). The span at 514 to 529 (SLNSNATTSGGNNRSI) shows a compositional bias: polar residues. Residues 514 to 587 (SLNSNATTSG…SDEDDFDSDE (74 aa)) form a disordered region. Residues 536–587 (YDDEEEDEEDEDEEDEEEDEEEEEEEEEEEEDYDDEDLNDEESDEDDFDSDE) show a composition bias toward acidic residues. The interval 537 to 588 (DDEEEDEEDEDEEDEEEDEEEEEEEEEEEEDYDDEDLNDEESDEDDFDSDED) is DEED region. 2 calmodulin binding regions span residues 589-606 (VSRF…KIYK) and 596-613 (KLLQ…RFEH). Disordered regions lie at residues 613–639 (HSRQ…SHSR) and 660–700 (LSPT…RTNI). Positions 668 to 691 (LSNQFHQDGGNNTTDGNLFNNFST) are enriched in polar residues.

In terms of assembly, interacts with calmodulin and CBPD1 in the presence of Ca(2+).

It is found in the nucleus. This is Nucleomorphin (numA) from Dictyostelium discoideum (Social amoeba).